Reading from the N-terminus, the 94-residue chain is DNA-directed RNA polymerase subunit omega (94 aa).

It belongs to the RNA polymerase subunit omega family. In terms of assembly, the RNAP catalytic core consists of 2 alpha, 1 beta, 1 beta' and 1 omega subunit. When a sigma factor is associated with the core the holoenzyme is formed, which can initiate transcription.

It catalyses the reaction RNA(n) + a ribonucleoside 5'-triphosphate = RNA(n+1) + diphosphate. Its function is as follows. Promotes RNA polymerase assembly. Latches the N- and C-terminal regions of the beta' subunit thereby facilitating its interaction with the beta and alpha subunits. The polypeptide is DNA-directed RNA polymerase subunit omega (Bifidobacterium longum subsp. infantis (strain ATCC 15697 / DSM 20088 / JCM 1222 / NCTC 11817 / S12)).